We begin with the raw amino-acid sequence, 156 residues long: Small ribosomal subunit protein uS7 (156 aa).

This sequence belongs to the universal ribosomal protein uS7 family. As to quaternary structure, part of the 30S ribosomal subunit. Contacts proteins S9 and S11.

One of the primary rRNA binding proteins, it binds directly to 16S rRNA where it nucleates assembly of the head domain of the 30S subunit. Is located at the subunit interface close to the decoding center, probably blocks exit of the E-site tRNA. In Limosilactobacillus fermentum (strain NBRC 3956 / LMG 18251) (Lactobacillus fermentum), this protein is Small ribosomal subunit protein uS7.